A 479-amino-acid chain; its full sequence is Oxysterol-binding protein homolog C23B6.01c (479 aa).

4 positions are modified to phosphoserine: Ser328, Ser408, Ser409, and Ser421. Positions 404–418 are enriched in basic and acidic residues; it reads KPEDSSIHKHSRDAS. The interval 404 to 479 is disordered; sequence KPEDSSIHKH…KLHEEQDPAL (76 aa). Polar residues predominate over residues 439–452; the sequence is QSTASFVTYRSDNG. Residues 470 to 479 are compositionally biased toward basic and acidic residues; sequence KLHEEQDPAL.

This sequence belongs to the OSBP family.

The protein localises to the cytoplasm. It localises to the nucleus. In Schizosaccharomyces pombe (strain 972 / ATCC 24843) (Fission yeast), this protein is Oxysterol-binding protein homolog C23B6.01c.